Here is a 202-residue protein sequence, read N- to C-terminus: Cutinase (202 aa).

The signal sequence occupies residues Met1–Ala20. Cys31 and Cys106 are joined by a disulfide. Ser117 functions as the Nucleophile in the catalytic mechanism. Cys165 and Cys172 are joined by a disulfide. Asp169 is an active-site residue. Residue His182 is the Proton donor/acceptor of the active site.

It belongs to the cutinase family. The 2 disulfide bonds play a critical role in holding the catalytic residues in juxta-position; reduction of the disulfide bridges results in the complete inactivation of the enzyme.

It localises to the secreted. The enzyme catalyses cutin + H2O = cutin monomers.. Its function is as follows. Catalyzes the hydrolysis of complex carboxylic polyesters found in the cell wall of plants. Degrades cutin, a macromolecule that forms the structure of the plant cuticle. Allows pathogenic fungi to penetrate through the cuticular barrier into the host plant during the initial stage of fungal infection. The chain is Cutinase from Botryotinia fuckeliana (Noble rot fungus).